The chain runs to 141 residues: UPF0310 protein SGO_1818 (141 aa).

The protein belongs to the UPF0310 family.

This Streptococcus gordonii (strain Challis / ATCC 35105 / BCRC 15272 / CH1 / DL1 / V288) protein is UPF0310 protein SGO_1818.